The chain runs to 163 residues: uncharacterized protein (163 aa).

A disordered region spans residues Gly30–Arg163. Positions Glu88–Asp118 are enriched in basic and acidic residues. Acidic residues predominate over residues Glu119 to Asp133. A Phosphoserine modification is found at Ser125. At Thr127 the chain carries Phosphothreonine.

It localises to the nucleus. The protein localises to the nucleolus. This is an uncharacterized protein from Schizosaccharomyces pombe (strain 972 / ATCC 24843) (Fission yeast).